A 480-amino-acid chain; its full sequence is Proline--tRNA ligase (480 aa).

This sequence belongs to the class-II aminoacyl-tRNA synthetase family. ProS type 3 subfamily. Homodimer.

The protein localises to the cytoplasm. The catalysed reaction is tRNA(Pro) + L-proline + ATP = L-prolyl-tRNA(Pro) + AMP + diphosphate. Its function is as follows. Catalyzes the attachment of proline to tRNA(Pro) in a two-step reaction: proline is first activated by ATP to form Pro-AMP and then transferred to the acceptor end of tRNA(Pro). The sequence is that of Proline--tRNA ligase from Methanosarcina mazei (strain ATCC BAA-159 / DSM 3647 / Goe1 / Go1 / JCM 11833 / OCM 88) (Methanosarcina frisia).